A 284-amino-acid polypeptide reads, in one-letter code: Protoheme IX farnesyltransferase (284 aa).

A run of 9 helical transmembrane segments spans residues 2 to 19 (SLVV…PVTV), 23 to 45 (IALT…NMWS), 69 to 89 (GEAL…LGLA), 92 to 112 (LFAA…YSMW), 121 to 141 (IVIG…VATG), 148 to 168 (LFMF…LALF), 194 to 214 (VLVY…TGTG), 217 to 237 (LYLA…VRTW), and 263 to 283 (LFLH…GLGG).

Belongs to the UbiA prenyltransferase family. Protoheme IX farnesyltransferase subfamily. As to quaternary structure, interacts with CtaA.

It is found in the cell inner membrane. The catalysed reaction is heme b + (2E,6E)-farnesyl diphosphate + H2O = Fe(II)-heme o + diphosphate. It functions in the pathway porphyrin-containing compound metabolism; heme O biosynthesis; heme O from protoheme: step 1/1. Converts heme B (protoheme IX) to heme O by substitution of the vinyl group on carbon 2 of heme B porphyrin ring with a hydroxyethyl farnesyl side group. The protein is Protoheme IX farnesyltransferase of Cereibacter sphaeroides (Rhodobacter sphaeroides).